We begin with the raw amino-acid sequence, 302 residues long: Small ribosomal subunit biogenesis GTPase RsgA (302 aa).

The 161-residue stretch at 69-229 (KNLLIRPKVA…VGDTPGFSKV (161 aa)) folds into the CP-type G domain. Residues 118–121 (NKID) and 172–180 (GPSGVGKSS) contribute to the GTP site. Residues Cys-252, Cys-257, His-259, and Cys-265 each coordinate Zn(2+).

It belongs to the TRAFAC class YlqF/YawG GTPase family. RsgA subfamily. Monomer. Associates with 30S ribosomal subunit, binds 16S rRNA. Zn(2+) is required as a cofactor.

The protein localises to the cytoplasm. One of several proteins that assist in the late maturation steps of the functional core of the 30S ribosomal subunit. Helps release RbfA from mature subunits. May play a role in the assembly of ribosomal proteins into the subunit. Circularly permuted GTPase that catalyzes slow GTP hydrolysis, GTPase activity is stimulated by the 30S ribosomal subunit. This is Small ribosomal subunit biogenesis GTPase RsgA from Aquifex aeolicus (strain VF5).